We begin with the raw amino-acid sequence, 513 residues long: Histidine--tRNA ligase (513 aa).

Residues 1 to 24 (MADKAQLQEAIKTQGEVVRKLKSE) constitute a mitochondrion transit peptide. The WHEP-TRS domain occupies 3-59 (DKAQLQEAIKTQGEVVRKLKSEKASKEQIDEEVARLLQLKAQLGGDEGKHVFVLKTA). L-histidine contacts are provided by residues 130 to 132 (DLT), Arg-157, Gln-173, Asp-177, Arg-326, and 330 to 331 (YY).

It belongs to the class-II aminoacyl-tRNA synthetase family.

It is found in the cytoplasm. The protein resides in the mitochondrion. It carries out the reaction tRNA(His) + L-histidine + ATP = L-histidyl-tRNA(His) + AMP + diphosphate + H(+). Its function is as follows. Catalyzes the aminoacylation of histidyl-tRNA. This chain is Histidine--tRNA ligase, found in Danio rerio (Zebrafish).